We begin with the raw amino-acid sequence, 387 residues long: Odorant receptor 19a (387 aa).

Over 1-40 the chain is Cytoplasmic; that stretch reads MDISKVDSTRALVNHWRIFRIMGIHPPGKRTFWGRHYTAY. A helical transmembrane segment spans residues 41 to 61; that stretch reads SMVWNVTFHICIWVSFSVNLL. Residues 62–71 are Extracellular-facing; that stretch reads QSNSLETFCE. Residues 72–92 form a helical membrane-spanning segment; the sequence is SLCVTMPHTLYMLKLINVRRM. Over 93 to 127 the chain is Cytoplasmic; that stretch reads RGQMISSHWLLRLLDKRLGCDDERQIIMAGIERAE. The helical transmembrane segment at 128–148 threads the bilayer; that stretch reads FIFRTIFRGLACTVVLGIIYI. The Extracellular portion of the chain corresponds to 149 to 171; that stretch reads SASSEPTLMYPTWIPWNWRDSTS. Residues 172 to 192 form a helical membrane-spanning segment; the sequence is AYLATAMLHTTALMANATLVL. At 193 to 254 the chain is on the cytoplasmic side; sequence NLSSYPGTYL…LRLFKSLERS (62 aa). Residues 255–275 form a helical membrane-spanning segment; sequence LSMTCFLQFFSTACAQCTICY. Residues 276–285 are Extracellular-facing; the sequence is FLLFGNVGIM. Residues 286–306 form a helical membrane-spanning segment; it reads RFMNMLFLLVILTTETLLLCY. At 307 to 336 the chain is on the cytoplasmic side; that stretch reads TAELPCKEGESLLTAVYSCNWLSQSVNFRR. The helical transmembrane segment at 337 to 357 threads the bilayer; it reads LLLLMLARCQIPMILVSGVIV. The Extracellular portion of the chain corresponds to 358-387; sequence PISMKTFTVMIKGAYTMLTLLNEIRKTSLE.

It belongs to the insect chemoreceptor superfamily. Heteromeric odorant receptor channel (TC 1.A.69) family. Or2a subfamily. In terms of assembly, interacts with Orco. Complexes exist early in the endomembrane system in olfactory sensory neurons (OSNs), coupling these complexes to the conserved ciliary trafficking pathway. As to expression, expressed in ai2A olfactory sensory neurons in the antenna.

It localises to the cell membrane. Odorant receptor which mediates acceptance or avoidance behavior, depending on its substrates. The odorant receptor repertoire encodes a large collection of odor stimuli that vary widely in identity, intensity, and duration. May form a complex with Orco to form odorant-sensing units, providing sensitive and prolonged odorant signaling and calcium permeability. Involved in the preference for citrus fruits for oviposition, especially through the response to valencene, the primary ligand of Or19a. Larvae growing on citrus fruits suffer a reduced risk of parasitism since endoparasitoid wasps that parasitize larvae are strongly repelled by the smell of citrus, as well as by valencene. The sequence is that of Odorant receptor 19a (Or19a) from Drosophila melanogaster (Fruit fly).